Consider the following 590-residue polypeptide: Aspartate--tRNA ligase (590 aa).

Glu174 serves as a coordination point for L-aspartate. Residues 198–201 (QLMK) form an aspartate region. Arg220 serves as a coordination point for L-aspartate. ATP contacts are provided by residues 220 to 222 (RDE) and Gln229. His443 is a binding site for L-aspartate. An ATP-binding site is contributed by Glu484. Arg491 is a binding site for L-aspartate. Residue 536–539 (GLDR) participates in ATP binding.

Belongs to the class-II aminoacyl-tRNA synthetase family. Type 1 subfamily. In terms of assembly, homodimer.

It is found in the cytoplasm. It catalyses the reaction tRNA(Asp) + L-aspartate + ATP = L-aspartyl-tRNA(Asp) + AMP + diphosphate. Catalyzes the attachment of L-aspartate to tRNA(Asp) in a two-step reaction: L-aspartate is first activated by ATP to form Asp-AMP and then transferred to the acceptor end of tRNA(Asp). This chain is Aspartate--tRNA ligase, found in Lactococcus lactis subsp. cremoris (strain SK11).